The sequence spans 318 residues: Transaldolase (318 aa).

The active-site Schiff-base intermediate with substrate is Lys-132.

This sequence belongs to the transaldolase family. Type 1 subfamily. Homodimer.

The protein localises to the cytoplasm. The catalysed reaction is D-sedoheptulose 7-phosphate + D-glyceraldehyde 3-phosphate = D-erythrose 4-phosphate + beta-D-fructose 6-phosphate. It functions in the pathway carbohydrate degradation; pentose phosphate pathway; D-glyceraldehyde 3-phosphate and beta-D-fructose 6-phosphate from D-ribose 5-phosphate and D-xylulose 5-phosphate (non-oxidative stage): step 2/3. Its function is as follows. Transaldolase is important for the balance of metabolites in the pentose-phosphate pathway. This Shewanella sp. (strain ANA-3) protein is Transaldolase.